Here is a 980-residue protein sequence, read N- to C-terminus: GPI inositol-deacylase (980 aa).

The Cytoplasmic portion of the chain corresponds to 1–7 (MFMFRNC). Residues 8-28 (AVLLVIGSICCFIYGLFRLHV) form a helical membrane-spanning segment. Topologically, residues 29-628 (EVEPNACRMT…EYSYSSALSR (600 aa)) are lumenal. Residue S170 is part of the active site. N-linked (GlcNAc...) asparagine glycans are attached at residues N427, N517, and N596. The chain crosses the membrane as a helical span at residues 629-649 (LVLEFYGWLPAHLVCVLLIVL). The Cytoplasmic segment spans residues 650–709 (RKQVETFYDVGTFRSLRPYVGYLQYTSLYIVTACRLLKKLIISSRVFPEPEPLDYSINVS). Residues 710–730 (IVIHCAAIALSLLATLGTWLA) traverse the membrane as a helical segment. Over 731 to 774 (LTLYGNAFYRLALRITRLSQATSNVMISIMTHLPITYGILTIAT) the chain is Lumenal. Residues 775-795 (AMGTCSGVGLLLAFVFYFLML) form a helical membrane-spanning segment. Residues 796 to 867 (SNAYKDYLED…CVGLQNFSFH (72 aa)) lie on the Cytoplasmic side of the membrane. The tract at residues 821–853 (AVTEQEDATEEQNEEQNALKQNDEQKQQQQEEE) is disordered. Residues 824 to 834 (EQEDATEEQNE) are compositionally biased toward acidic residues. A helical membrane pass occupies residues 868–888 (VTLLLMLFVQLLLNAPSSLAW). Topologically, residues 889 to 895 (LRSRRHG) are lumenal. Residues 896 to 916 (INLPDPSLYPSIVVLASLSLL) traverse the membrane as a helical segment. At 917–929 (LQLRAPQKCQGYW) the chain is on the cytoplasmic side. Residues 930–950 (MLSIAFYILAGVVLLYCQAAI) form a helical membrane-spanning segment. Over 951–954 (YRLT) the chain is Lumenal. The helical transmembrane segment at 955 to 975 (YVIAGAFALLSAHQSLWILWG) threads the bilayer. Over 976–980 (RVSRV) the chain is Cytoplasmic.

Belongs to the GPI inositol-deacylase family.

Its subcellular location is the endoplasmic reticulum membrane. Its function is as follows. Involved in inositol deacylation of GPI-anchored proteins. The protein is GPI inositol-deacylase of Drosophila melanogaster (Fruit fly).